A 257-amino-acid polypeptide reads, in one-letter code: Snake venom serine proteinase 11 (257 aa).

Residues 1 to 18 form the signal peptide; the sequence is MVLIRVLANLLILQLSYA. Positions 19–24 are excised as a propeptide; that stretch reads QKSSEL. One can recognise a Peptidase S1 domain in the interval 25–248; that stretch reads VVGGDECNIN…YTEWIQSIIT (224 aa). Cystine bridges form between Cys-31-Cys-162, Cys-49-Cys-65, Cys-97-Cys-255, Cys-141-Cys-209, Cys-173-Cys-188, and Cys-199-Cys-224. Residues His-64 and Asp-109 each act as charge relay system in the active site. N-linked (GlcNAc...) asparagine glycosylation is present at Asn-120. Ser-203 serves as the catalytic Charge relay system.

The protein belongs to the peptidase S1 family. Snake venom subfamily. In terms of assembly, monomer. In terms of tissue distribution, expressed by the venom gland.

Its subcellular location is the secreted. In terms of biological role, snake venom serine protease that may act in the hemostasis system of the prey. The sequence is that of Snake venom serine proteinase 11 from Crotalus adamanteus (Eastern diamondback rattlesnake).